The primary structure comprises 437 residues: UBX domain-containing protein 6 (437 aa).

Disordered stretches follow at residues 1–45 and 89–109; these read MNSF…AQGG and ERRQ…QPDR. Residues 7–18 are compositionally biased toward basic residues; sequence FLNKKRVQNHFK. A PUB domain is found at 179–251; sequence ETAIETICKY…VFTKPSDVHL (73 aa). Residues 332–409 enclose the UBX domain; it reads YRYKYTLIRV…SLAPAALLHV (78 aa).

As to quaternary structure, interacts with cdc-48.1 (via N-terminus) and cdc-48.2 (via N-terminus). In terms of tissue distribution, expressed in the pharynx and some head neurons.

Probably acts as an adapter for ATPase cdc-48.1 and/or cdc-48.2, conferring substrate specificity. Involved in the lysosomal clearance of cellular material in diet restricted conditions. This Caenorhabditis elegans protein is UBX domain-containing protein 6.